The sequence spans 719 residues: T-cell immunomodulatory protein homolog (719 aa).

An N-terminal signal peptide occupies residues 1-32 (MYNFLSCKKKSIILQVLLIICTYNILLNFVNI). Topologically, residues 33-677 (FVNNNEKNHK…LSVNPSKKFY (645 aa)) are extracellular. Residues Asn144, Asn277, Asn410, Asn540, and Asn659 are each glycosylated (N-linked (GlcNAc...) asparagine). The chain crosses the membrane as a helical span at residues 678-697 (SILYITLICLSVIGVLIFIL). Residues 698–719 (DRKEKVEDSKEELGFKSHFVIG) are Cytoplasmic-facing.

Belongs to the TIP family.

It localises to the membrane. Functionally, may protect the parasite against attack by the host immune system by immunomodulation. This is T-cell immunomodulatory protein homolog from Plasmodium falciparum (isolate 3D7).